The following is a 358-amino-acid chain: Histidinol-phosphate aminotransferase (358 aa).

At lysine 218 the chain carries N6-(pyridoxal phosphate)lysine.

It belongs to the class-II pyridoxal-phosphate-dependent aminotransferase family. Histidinol-phosphate aminotransferase subfamily. In terms of assembly, homodimer. Pyridoxal 5'-phosphate is required as a cofactor.

It catalyses the reaction L-histidinol phosphate + 2-oxoglutarate = 3-(imidazol-4-yl)-2-oxopropyl phosphate + L-glutamate. Its pathway is amino-acid biosynthesis; L-histidine biosynthesis; L-histidine from 5-phospho-alpha-D-ribose 1-diphosphate: step 7/9. The sequence is that of Histidinol-phosphate aminotransferase from Dehalococcoides mccartyi (strain ATCC BAA-2266 / KCTC 15142 / 195) (Dehalococcoides ethenogenes (strain 195)).